The following is a 111-amino-acid chain: Disintegrin DS-AN (111 aa).

Positions 1-20 are cleaved as a signal peptide; sequence MIQVLLVIICLAVFPYQGSC. Positions 21–47 are excised as a propeptide; the sequence is IILESGNVNDYEIVYPKKLIVLPTGAM. One can recognise a Disintegrin domain in the interval 47 to 111; that stretch reads MNSPHPCCDP…PDCPRNPYKD (65 aa). Intrachain disulfides connect Cys53–Cys76, Cys67–Cys73, Cys72–Cys97, and Cys85–Cys104. Positions 89–91 match the Cell attachment site motif; the sequence is RGD.

In terms of assembly, heterodimer; disulfide-linked.

The protein resides in the secreted. In terms of biological role, inhibits ADP-induced platelet aggregation in human platelet-rich plasma (IC(50) is 8 uM). This is Disintegrin DS-AN from Atheris nitschei (Great lakes bush viper).